We begin with the raw amino-acid sequence, 259 residues long: Large ribosomal subunit protein uL3m (259 aa).

Residues 1–15 (MQSRFLISPTLIRTF) constitute a mitochondrion transit peptide. Residues 176-197 (ASHGASLSHRTPGSTGQNTTPS) are compositionally biased toward polar residues. Residues 176-208 (ASHGASLSHRTPGSTGQNTTPSRVLPGRKMAGH) are disordered.

Belongs to the universal ribosomal protein uL3 family. As to quaternary structure, component of the mitochondrial large ribosomal subunit (mt-LSU). Mature yeast 74S mitochondrial ribosomes consist of a small (37S) and a large (54S) subunit. The 37S small subunit contains a 15S ribosomal RNA (15S mt-rRNA) and at least 32 different proteins. The 54S large subunit contains a 21S rRNA (21S mt-rRNA) and at least 45 different proteins.

Its subcellular location is the cytoplasm. The protein resides in the mitochondrion. In terms of biological role, component of the mitochondrial ribosome (mitoribosome), a dedicated translation machinery responsible for the synthesis of mitochondrial genome-encoded proteins, including at least some of the essential transmembrane subunits of the mitochondrial respiratory chain. The mitoribosomes are attached to the mitochondrial inner membrane and translation products are cotranslationally integrated into the membrane. In Schizosaccharomyces pombe (strain 972 / ATCC 24843) (Fission yeast), this protein is Large ribosomal subunit protein uL3m (mrpl9).